The following is a 338-amino-acid chain: HTH-type transcriptional regulator SyrM 1 (338 aa).

An HTH lysR-type domain is found at Leu35 to Thr92. The segment at residues Val52–Arg72 is a DNA-binding region (H-T-H motif).

This sequence belongs to the LysR transcriptional regulatory family.

Transcriptional activator that regulates the expression of genes involved in symbiosis. Among other targets it acts on the nolWBTUV operon. The sequence is that of HTH-type transcriptional regulator SyrM 1 (syrM1) from Sinorhizobium fredii (strain NBRC 101917 / NGR234).